Here is a 155-residue protein sequence, read N- to C-terminus: Small ribosomal subunit protein uS7 (155 aa).

The protein belongs to the universal ribosomal protein uS7 family. Part of the 30S ribosomal subunit. Contacts proteins S9 and S11.

In terms of biological role, one of the primary rRNA binding proteins, it binds directly to 16S rRNA where it nucleates assembly of the head domain of the 30S subunit. Is located at the subunit interface close to the decoding center, probably blocks exit of the E-site tRNA. This chain is Small ribosomal subunit protein uS7, found in Corynebacterium diphtheriae (strain ATCC 700971 / NCTC 13129 / Biotype gravis).